The chain runs to 207 residues: ATP synthase subunit b 2 (207 aa).

The chain crosses the membrane as a helical span at residues Thr53–Met72.

Belongs to the ATPase B chain family. As to quaternary structure, F-type ATPases have 2 components, F(1) - the catalytic core - and F(0) - the membrane proton channel. F(1) has five subunits: alpha(3), beta(3), gamma(1), delta(1), epsilon(1). F(0) has three main subunits: a(1), b(2) and c(10-14). The alpha and beta chains form an alternating ring which encloses part of the gamma chain. F(1) is attached to F(0) by a central stalk formed by the gamma and epsilon chains, while a peripheral stalk is formed by the delta and b chains.

Its subcellular location is the cell inner membrane. Its function is as follows. F(1)F(0) ATP synthase produces ATP from ADP in the presence of a proton or sodium gradient. F-type ATPases consist of two structural domains, F(1) containing the extramembraneous catalytic core and F(0) containing the membrane proton channel, linked together by a central stalk and a peripheral stalk. During catalysis, ATP synthesis in the catalytic domain of F(1) is coupled via a rotary mechanism of the central stalk subunits to proton translocation. Functionally, component of the F(0) channel, it forms part of the peripheral stalk, linking F(1) to F(0). The b'-subunit is a diverged and duplicated form of b found in plants and photosynthetic bacteria. This is ATP synthase subunit b 2 (atpF2) from Rhizobium leguminosarum bv. trifolii (strain WSM2304).